Reading from the N-terminus, the 501-residue chain is L-arabinose isomerase (501 aa).

Residues E307, E334, H351, and H450 each coordinate Mn(2+).

It belongs to the arabinose isomerase family. Mn(2+) serves as cofactor.

It carries out the reaction beta-L-arabinopyranose = L-ribulose. The protein operates within carbohydrate degradation; L-arabinose degradation via L-ribulose; D-xylulose 5-phosphate from L-arabinose (bacterial route): step 1/3. Its function is as follows. Catalyzes the conversion of L-arabinose to L-ribulose. The chain is L-arabinose isomerase from Acidothermus cellulolyticus (strain ATCC 43068 / DSM 8971 / 11B).